A 337-amino-acid polypeptide reads, in one-letter code: Major outer membrane protein P.IB (337 aa).

The first 19 residues, 1-19 (MKKSLIALTLAALPVAAMA), serve as a signal peptide directing secretion.

This sequence belongs to the Gram-negative porin family. Homotrimer.

It localises to the cell outer membrane. Its function is as follows. Serves as a slightly cation selective porin. The protein is Major outer membrane protein P.IB (por) of Neisseria lactamica.